Consider the following 84-residue polypeptide: Small ribosomal subunit protein uS17 (84 aa).

It belongs to the universal ribosomal protein uS17 family. Part of the 30S ribosomal subunit.

In terms of biological role, one of the primary rRNA binding proteins, it binds specifically to the 5'-end of 16S ribosomal RNA. The sequence is that of Small ribosomal subunit protein uS17 from Pectobacterium atrosepticum (strain SCRI 1043 / ATCC BAA-672) (Erwinia carotovora subsp. atroseptica).